Consider the following 155-residue polypeptide: Ribosomal RNA large subunit methyltransferase H (155 aa).

S-adenosyl-L-methionine contacts are provided by residues Leu72, Gly103, and 122–127; that span reads LSPLTL.

Belongs to the RNA methyltransferase RlmH family. As to quaternary structure, homodimer.

The protein localises to the cytoplasm. The enzyme catalyses pseudouridine(1915) in 23S rRNA + S-adenosyl-L-methionine = N(3)-methylpseudouridine(1915) in 23S rRNA + S-adenosyl-L-homocysteine + H(+). Functionally, specifically methylates the pseudouridine at position 1915 (m3Psi1915) in 23S rRNA. The sequence is that of Ribosomal RNA large subunit methyltransferase H from Histophilus somni (strain 2336) (Haemophilus somnus).